We begin with the raw amino-acid sequence, 420 residues long: Serine hydroxymethyltransferase (420 aa).

Residues leucine 121 and glycine 125 to leucine 127 contribute to the (6S)-5,6,7,8-tetrahydrofolate site. An N6-(pyridoxal phosphate)lysine modification is found at lysine 230. (6S)-5,6,7,8-tetrahydrofolate contacts are provided by residues glutamate 246 and serine 354–phenylalanine 356.

It belongs to the SHMT family. In terms of assembly, homodimer. Pyridoxal 5'-phosphate is required as a cofactor.

It is found in the cytoplasm. The catalysed reaction is (6R)-5,10-methylene-5,6,7,8-tetrahydrofolate + glycine + H2O = (6S)-5,6,7,8-tetrahydrofolate + L-serine. It functions in the pathway one-carbon metabolism; tetrahydrofolate interconversion. It participates in amino-acid biosynthesis; glycine biosynthesis; glycine from L-serine: step 1/1. Its function is as follows. Catalyzes the reversible interconversion of serine and glycine with tetrahydrofolate (THF) serving as the one-carbon carrier. This reaction serves as the major source of one-carbon groups required for the biosynthesis of purines, thymidylate, methionine, and other important biomolecules. Also exhibits THF-independent aldolase activity toward beta-hydroxyamino acids, producing glycine and aldehydes, via a retro-aldol mechanism. In Rickettsia massiliae (strain Mtu5), this protein is Serine hydroxymethyltransferase.